A 229-amino-acid polypeptide reads, in one-letter code: Large ribosomal subunit protein uL1 (229 aa).

The protein belongs to the universal ribosomal protein uL1 family. As to quaternary structure, part of the 50S ribosomal subunit.

Its function is as follows. Binds directly to 23S rRNA. The L1 stalk is quite mobile in the ribosome, and is involved in E site tRNA release. Protein L1 is also a translational repressor protein, it controls the translation of the L11 operon by binding to its mRNA. This Rhodopseudomonas palustris (strain TIE-1) protein is Large ribosomal subunit protein uL1.